Consider the following 172-residue polypeptide: Dual-action ribosomal maturation protein DarP (172 aa).

Belongs to the DarP family.

Its subcellular location is the cytoplasm. Member of a network of 50S ribosomal subunit biogenesis factors which assembles along the 30S-50S interface, preventing incorrect 23S rRNA structures from forming. Promotes peptidyl transferase center (PTC) maturation. The protein is Dual-action ribosomal maturation protein DarP of Azotobacter vinelandii (strain DJ / ATCC BAA-1303).